Here is a 367-residue protein sequence, read N- to C-terminus: Serine/threonine-protein kinase Sgk2 (367 aa).

Residues Met1–Pro28 are disordered. At Ser10 the chain carries Phosphoserine. Positions Arg15 to Pro28 are enriched in polar residues. Positions Phe35–Phe292 constitute a Protein kinase domain. ATP is bound by residues Ile41–Val49 and Lys64. The short motif at Lys68 to Gln77 is the Nuclear localization signal element. Asp159 (proton acceptor) is an active-site residue. Thr193 is subject to Phosphothreonine; by PDPK1. The region spanning Ser293–Ser367 is the AGC-kinase C-terminal domain. Phosphoserine is present on residues Ser334 and Ser356. Tyr357 is subject to Phosphotyrosine.

It belongs to the protein kinase superfamily. AGC Ser/Thr protein kinase family. In terms of processing, activated by phosphorylation on Ser-356 by an unknown kinase (may be mTORC2 but not confirmed), transforming it into a substrate for PDPK1 which then phosphorylates it on Thr-193. As to expression, expressed in the proximal tubule and thick ascending limb of the loop of Henle (TALH).

Its subcellular location is the cytoplasm. It is found in the nucleus. The enzyme catalyses L-seryl-[protein] + ATP = O-phospho-L-seryl-[protein] + ADP + H(+). The catalysed reaction is L-threonyl-[protein] + ATP = O-phospho-L-threonyl-[protein] + ADP + H(+). Its activity is regulated as follows. Two specific sites, one in the kinase domain (Thr-193) and the other in the C-terminal regulatory region (Ser-356), need to be phosphorylated for its full activation. Functionally, serine/threonine-protein kinase which is involved in the regulation of a wide variety of ion channels, membrane transporters, cell growth, survival and proliferation. Up-regulates Na(+) channels: SCNN1A/ENAC, K(+) channels: KCNA3/Kv1.3, KCNE1 and KCNQ1, amino acid transporter: SLC6A19, glutamate transporter: SLC1A6/EAAT4, glutamate receptors: GRIA1/GLUR1 and GRIK2/GLUR6, Na(+)/H(+) exchanger: SLC9A3/NHE3, and the Na(+)/K(+) ATPase. The polypeptide is Serine/threonine-protein kinase Sgk2 (Sgk2) (Rattus norvegicus (Rat)).